Consider the following 163-residue polypeptide: uncharacterized protein (163 aa).

The tract at residues 23-113 (DFPEEPPLWV…QVADGVHSQQ (91 aa)) is disordered. Phosphoserine is present on Ser102.

This is an uncharacterized protein from Mus musculus (Mouse).